A 661-amino-acid polypeptide reads, in one-letter code: WD repeat-containing protein 26 (661 aa).

Gly residues predominate over residues 1-27; it reads MQANGAGGGGGGGGGGGGGGGGGGGQG. 2 disordered regions span residues 1-70 and 99-118; these read MQAN…ASNN and TAASSSLATPELGSSLKKKK. 2 stretches are compositionally biased toward low complexity: residues 56-70 and 99-113; these read ANGLLPSAPSAASNN and TAASSSLATPELGSS. Ser121 and Ser123 each carry phosphoserine. The region spanning 123-155 is the LisH domain; sequence SDEDVIRLIGQHLNGLGLNQTVDLLMQESGCRL. The CTLH domain occupies 156-231; the sequence is EHPSATKFRN…EYLEDGKVLE (76 aa). WD repeat units lie at residues 353–392, 399–438, 444–484, 524–563, 566–608, and 611–651; these read EHCNEVWFCKFSNDGTKLATGSKDTTVIIWQVDPDTHLLK, GHAYGVSYIAWSPDDNYLVACGPDDCSELWLWNVQTGELR, SHED…DSWE, QEDHPIMSFTISKNGRLALLNVATQGVHLWDLQDRVLVRK, GVTQ…PIAE, and GHTR…DHQN.

In terms of assembly, forms homooligomers. Identified in the CTLH complex that contains GID4, RANBP9 and/or RANBP10, MKLN1, MAEA, RMND5A (or alternatively its paralog RMND5B), GID8, ARMC8, WDR26 and YPEL5. Within this complex, MAEA, RMND5A (or alternatively its paralog RMND5B), GID8, WDR26, and RANBP9 and/or RANBP10 form the catalytic core, while GID4, MKLN1, ARMC8 and YPEL5 have ancillary roles. Interacts with DDB1-CUL4A/B E3 ligase complexes. Forms a complex composed of at least WDR26, a G-beta:gamma unit, and PLCB2. Interacts with AXIN1. As to expression, broadly expressed, with highest levels in heart and skeletal muscle.

It localises to the cytoplasm. Its subcellular location is the nucleus. It is found in the mitochondrion. Functionally, G-beta-like protein involved in cell signal transduction. Acts as a negative regulator in MAPK signaling pathway. Functions as a scaffolding protein to promote G beta:gamma-mediated PLCB2 plasma membrane translocation and subsequent activation in leukocytes. Core component of the CTLH E3 ubiquitin-protein ligase complex that selectively accepts ubiquitin from UBE2H and mediates ubiquitination and subsequent proteasomal degradation of the transcription factor HBP1. Acts as a negative regulator of the canonical Wnt signaling pathway through preventing ubiquitination of beta-catenin CTNNB1 by the beta-catenin destruction complex, thus negatively regulating CTNNB1 degradation. Serves as a scaffold to coordinate PI3K/AKT pathway-driven cell growth and migration. Protects cells from oxidative stress-induced apoptosis via the down-regulation of AP-1 transcriptional activity as well as by inhibiting cytochrome c release from mitochondria. Also protects cells by promoting hypoxia-mediated autophagy and mitophagy. This is WD repeat-containing protein 26 (WDR26) from Homo sapiens (Human).